Consider the following 237-residue polypeptide: MDKVCAVFGGSRGIGRAVARLMAQRGYRLAIVARNLEGARAAAGDLGGDHLALSCDVAKEHDVQNTFEEIEKNLGRVNFLVNAAGINRDNLLVRTNTEDMLSQLHTNLLGSMLTCRAALKTMIKQQRGSIVNVGSVVGLKGNSGQSVYSASKGGLVGFSRALAKEVAKKKIRVNVVAPGFIHTDMTKDLNEELLKKNIPLGRFGDALDVAQAAVFLLESPYVTGHVLVVDGGLQLTM.

At methionine 1 the chain carries N-acetylmethionine. NADP(+) contacts are provided by residues 11–14 (SRGI), 34–35 (RN), aspartate 56, and 83–85 (AAG). Residue serine 135 participates in substrate binding. NADP(+) contacts are provided by residues tyrosine 148, lysine 152, and 181-183 (IHT). Tyrosine 148 (proton acceptor) is an active-site residue. Residue lysine 195 is modified to N6-acetyllysine.

This sequence belongs to the short-chain dehydrogenases/reductases (SDR) family. As to quaternary structure, homotetramer (in vitro). Heterotetramer with HSD17B8; contains two molecules each of HSD17B8 and CBR4. Does not form homotetramers when HSD17B8 is coexpressed, only heterotetramers (in vitro).

The protein resides in the mitochondrion matrix. The catalysed reaction is a (3R)-hydroxyacyl-[ACP] + NADP(+) = a 3-oxoacyl-[ACP] + NADPH + H(+). The enzyme catalyses a quinone + NADPH + H(+) = a quinol + NADP(+). The protein operates within lipid metabolism; fatty acid biosynthesis. In terms of biological role, component of the heterotetramer complex KAR (3-ketoacyl-[acyl carrier protein] reductase or 3-ketoacyl-[ACP] reductase) that forms part of the mitochondrial fatty acid synthase (mtFAS). Beta-subunit of the KAR heterotetramer complex, responsible for the 3-ketoacyl-ACP reductase activity of the mtFAS, reduces 3-oxoacyl-[ACP] to (3R)-hydroxyacyl-[ACP] in a NADPH-dependent manner with no chain length preference, thereby participating in mitochondrial fatty acid biosynthesis. The homotetramer has NADPH-dependent quinone reductase activity (in vitro), hence could play a role in protection against cytotoxicity of exogenous quinones. As a heterotetramer, it can also reduce 9,10-phenanthrenequinone, 1,4-benzoquinone and various other o-quinones and p-quinones (in vitro). In Bos taurus (Bovine), this protein is 3-oxoacyl-[acyl-carrier-protein] reductase (CBR4).